The chain runs to 197 residues: Holliday junction branch migration complex subunit RuvA (197 aa).

Positions M1 to V63 are domain I. The interval D64 to T139 is domain II. Residues T139–V143 are flexible linker. A domain III region spans residues N144 to R197.

This sequence belongs to the RuvA family. In terms of assembly, homotetramer. Forms an RuvA(8)-RuvB(12)-Holliday junction (HJ) complex. HJ DNA is sandwiched between 2 RuvA tetramers; dsDNA enters through RuvA and exits via RuvB. An RuvB hexamer assembles on each DNA strand where it exits the tetramer. Each RuvB hexamer is contacted by two RuvA subunits (via domain III) on 2 adjacent RuvB subunits; this complex drives branch migration. In the full resolvosome a probable DNA-RuvA(4)-RuvB(12)-RuvC(2) complex forms which resolves the HJ.

It is found in the cytoplasm. Functionally, the RuvA-RuvB-RuvC complex processes Holliday junction (HJ) DNA during genetic recombination and DNA repair, while the RuvA-RuvB complex plays an important role in the rescue of blocked DNA replication forks via replication fork reversal (RFR). RuvA specifically binds to HJ cruciform DNA, conferring on it an open structure. The RuvB hexamer acts as an ATP-dependent pump, pulling dsDNA into and through the RuvAB complex. HJ branch migration allows RuvC to scan DNA until it finds its consensus sequence, where it cleaves and resolves the cruciform DNA. The sequence is that of Holliday junction branch migration complex subunit RuvA from Mycobacterium marinum (strain ATCC BAA-535 / M).